Consider the following 236-residue polypeptide: Protein YIPF6 (236 aa).

A2 carries the N-acetylalanine modification. The Cytoplasmic segment spans residues 2–84; it reads AEAEDSPGEQ…HVLYPRKSNT (83 aa). S7 bears the Phosphoserine mark. Residues 85–105 traverse the membrane as a helical segment; the sequence is LLRDWDLWGPLILCVSLALML. Residues 106–116 are Lumenal-facing; the sequence is QKSSVEGKRDG. A helical transmembrane segment spans residues 117 to 137; the sequence is GSPEFAEVFVIIWFGAVTITL. Over 138 to 147 the chain is Cytoplasmic; sequence NSKLLGGNIS. Residues 148-168 form a helical membrane-spanning segment; the sequence is FFQSLCVLGYCVLPLNIAMLI. The Lumenal segment spans residues 169-185; it reads CRLLLLAGQGPINFMIR. The chain crosses the membrane as a helical span at residues 186-206; it reads LFVVLVMFAWSVIASTAFLAD. The Cytoplasmic portion of the chain corresponds to 207–213; sequence CQPPNRK. Residues 214-234 traverse the membrane as a helical segment; that stretch reads ALAVYPVFLFYFVVSWMILTF. At 235 to 236 the chain is on the lumenal side; it reads TP.

This sequence belongs to the YIP1 family. Predominantly interacts with YIPF1 or YIPF2, but may also form a ternary complex with YIPF1 and YIPF2. This interaction may stabilize YIPF1 and YIPF2.

It is found in the golgi apparatus membrane. In terms of biological role, may be required for stable YIPF1 and YIPF2 protein expression. The chain is Protein YIPF6 (Yipf6) from Rattus norvegicus (Rat).